The following is a 295-amino-acid chain: Phosphoenolpyruvate phosphomutase (295 aa).

D58 functions as the Nucleophile in the catalytic mechanism. Position 58 (D58) interacts with Mg(2+).

It belongs to the isocitrate lyase/PEP mutase superfamily. PEP mutase family. Homotetramer. Mg(2+) is required as a cofactor.

The catalysed reaction is phosphoenolpyruvate + H(+) = 3-phosphonopyruvate. It functions in the pathway phosphorus metabolism; phosphonate biosynthesis. Formation of a carbon-phosphorus bond by converting phosphoenolpyruvate (PEP) to phosphonopyruvate (P-Pyr). This chain is Phosphoenolpyruvate phosphomutase, found in Mytilus edulis (Blue mussel).